The sequence spans 124 residues: Large ribosomal subunit protein bL12 (124 aa).

The protein belongs to the bacterial ribosomal protein bL12 family. As to quaternary structure, homodimer. Part of the ribosomal stalk of the 50S ribosomal subunit. Forms a multimeric L10(L12)X complex, where L10 forms an elongated spine to which 2 to 4 L12 dimers bind in a sequential fashion. Binds GTP-bound translation factors.

Functionally, forms part of the ribosomal stalk which helps the ribosome interact with GTP-bound translation factors. Is thus essential for accurate translation. This chain is Large ribosomal subunit protein bL12, found in Nautilia profundicola (strain ATCC BAA-1463 / DSM 18972 / AmH).